We begin with the raw amino-acid sequence, 317 residues long: Ribosomal protein L11 methyltransferase (317 aa).

Residues T158, G179, D201, and N244 each contribute to the S-adenosyl-L-methionine site.

It belongs to the methyltransferase superfamily. PrmA family.

It is found in the cytoplasm. It carries out the reaction L-lysyl-[protein] + 3 S-adenosyl-L-methionine = N(6),N(6),N(6)-trimethyl-L-lysyl-[protein] + 3 S-adenosyl-L-homocysteine + 3 H(+). Functionally, methylates ribosomal protein L11. In Streptococcus pyogenes serotype M3 (strain ATCC BAA-595 / MGAS315), this protein is Ribosomal protein L11 methyltransferase.